A 726-amino-acid chain; its full sequence is Pre-mRNA-splicing factor CLF1 (726 aa).

HAT repeat units lie at residues 55-87, 89-121, 123-155, 157-188, 190-221, 223-262, 264-298, 308-340, 352-386, 396-432, 434-465, 467-499, 501-534, 536-567, 585-626, and 635-667; these read EFQARKRTEFESRIRYSRDSILAWTKYAQWEAS, NEYERSRSVFERALDVDPRSVDLWIKYTDMELK, RNINHARNLFDRAITLLPRVDALWYKYVYLEEL, LNVSGARQIFERWMQWEPNDKAWQSYIKLEER, NELDRASAIYERWIACRPIPKNWVTWAKFEED, GQPDKAREVFQTALEFFGDEEEQVEKAQSVFAAFARMETR, KEFERARVIYKFALARLPRSKSASLYAQYTKFEKQ, TVLGKRRIQYEEELAYDPTNYDAWFSLARLEED, VEPMRVREVYERAVANVPPALEKRYWRRYIYLWLQ, KDYDRARDVYKAAVKLVPHKTFTFAKLWLAYAYFEIR, LDVSAARKVLGAGIGMCPKPKLFTGYIELEMR, REFDRVRTLYEKFLTYDPSLSSAWIQWTQVESA, EDFERVRAIFELAVQQSLDMPEIVWKAYIDFEAG, GERERARNLYERLLERTSHVKVWISYALMEIA, GDAD…EHGD, and DMLPTTRKRWRKAEDGSGELEEYWDLVFPDDER. Residues 682 to 726 are disordered; that stretch reads AWAQQRAGQGEEGGLSYDLPSDSEDENEDGDEDGDGREEEGMDQD. Positions 702 to 726 are enriched in acidic residues; the sequence is SDSEDENEDGDEDGDGREEEGMDQD.

The protein belongs to the crooked-neck family. In terms of assembly, associated with the spliceosome.

The protein resides in the nucleus. In terms of biological role, involved in pre-mRNA splicing and cell cycle progression. Required for the spliceosome assembly and initiation of the DNA replication. The protein is Pre-mRNA-splicing factor CLF1 (CLF1) of Cryptococcus neoformans var. neoformans serotype D (strain B-3501A) (Filobasidiella neoformans).